Consider the following 166-residue polypeptide: Ribosome maturation factor RimM (166 aa).

The 75-residue stretch at 91-165 folds into the PRC barrel domain; the sequence is DDEFYHADLI…RIVADPPEGL (75 aa).

It belongs to the RimM family. As to quaternary structure, binds ribosomal protein uS19.

It localises to the cytoplasm. Functionally, an accessory protein needed during the final step in the assembly of 30S ribosomal subunit, possibly for assembly of the head region. Essential for efficient processing of 16S rRNA. May be needed both before and after RbfA during the maturation of 16S rRNA. It has affinity for free ribosomal 30S subunits but not for 70S ribosomes. The protein is Ribosome maturation factor RimM of Dinoroseobacter shibae (strain DSM 16493 / NCIMB 14021 / DFL 12).